The chain runs to 128 residues: Secreted RxLR effector protein RXLR-C09 (128 aa).

Residues 1–22 (MRFCLVFIRLAAFVILSGGATS) form the signal peptide. The RxLR-dEER motif lies at 58 to 75 (RLLRLNDQADISGHDEER).

Belongs to the RxLR effector family.

It is found in the secreted. Its subcellular location is the host cell membrane. The protein resides in the host nucleus. Its function is as follows. Secreted effector that suppresses pattern-triggered immunity (PTI) in plant host. The sequence is that of Secreted RxLR effector protein RXLR-C09 from Plasmopara halstedii (Downy mildew of sunflower).